The sequence spans 747 residues: Cyclic di-GMP phosphodiesterase PdeF (747 aa).

At 1–14 the chain is on the periplasmic side; it reads MKLNATYIKIRDKW. A helical membrane pass occupies residues 15–36; the sequence is WGLPLFLPSLILPIFAHINTFA. Topologically, residues 37–42 are cytoplasmic; sequence HISSGE. The chain crosses the membrane as a helical span at residues 43–65; the sequence is VFLFYLPLALMISMMMFFSWAAL. Residues 66 to 79 are Periplasmic-facing; sequence PGIALGIFVRKYAE. The chain crosses the membrane as a helical span at residues 80-102; sequence LGFYETLSLTANFIIIIILCWGG. Over 103–128 the chain is Cytoplasmic; the sequence is YRVFTPRRNNVSHGDTRLISQRIFWQ. A helical membrane pass occupies residues 129-151; sequence IVFPATLFLILFQFAAFVGLLAS. The Periplasmic segment spans residues 152 to 165; the sequence is RENLVGVMPFNLGT. A helical transmembrane segment spans residues 166 to 188; the sequence is LINYQALLVGNLIGVPLCYFIIR. Over 189 to 215 the chain is Cytoplasmic; sequence VVRNPFYLRSYYSQLKQQVDAKVTKKE. A helical transmembrane segment spans residues 216-235; sequence FALWLLALGALLLLLCMPLN. At 236-239 the chain is on the periplasmic side; sequence EKST. Residues 240 to 259 form a helical membrane-spanning segment; the sequence is IFSTNYTLSLLLPLMMWGAM. The Cytoplasmic segment spans residues 260-265; it reads RYGYKL. A helical transmembrane segment spans residues 266 to 285; the sequence is ISLLWAVVLMISIHSYQNYI. At 286–294 the chain is on the periplasmic side; it reads PIYPGYTTQ. Residues 295–317 traverse the membrane as a helical segment; that stretch reads LTITSSSYLVFSFIVNYMAVLAT. At 318–747 the chain is on the cytoplasmic side; that stretch reads RQRAVVRRIQ…NEIEPIRESA (430 aa). One can recognise an EAL domain in the interval 493–744; it reads KVAMMNRLQQ…DTLNEIEPIR (252 aa).

Mg(2+) is required as a cofactor. It depends on Mn(2+) as a cofactor.

Its subcellular location is the cell inner membrane. The enzyme catalyses 3',3'-c-di-GMP + H2O = 5'-phosphoguanylyl(3'-&gt;5')guanosine + H(+). Inhibited by pGpG. Functionally, phosphodiesterase (PDE) that catalyzes the hydrolysis of cyclic-di-GMP (c-di-GMP) to 5'-pGpG. Truncated proteins consisting of the GGDEF/EAL domains (residues 319-747) or of the EAL domain alone (481-747) have c-di-GMP phosphodiesterase activity. They do not have diguanylate cyclase activity. Cyclic-di-GMP is a second messenger which controls cell surface-associated traits in bacteria. The chain is Cyclic di-GMP phosphodiesterase PdeF from Escherichia coli (strain K12).